A 152-amino-acid chain; its full sequence is MTEIYVDADACPVKDEAVKVAERHGLTVHIVSNSGMRPTGHPLVKQVVVPAGPDVADDWIAERAGPQDIVITGDIPLAARALEKGAAALGHDGRPFTQDSIGMALAMRDLMRELRETGQSKGGGPAFSKEDRSRFLRSLEDTVQAIRRRPPP.

The interval 114–152 is disordered; sequence LRETGQSKGGGPAFSKEDRSRFLRSLEDTVQAIRRRPPP. The segment covering 128–140 has biased composition (basic and acidic residues); that stretch reads SKEDRSRFLRSLE.

This sequence belongs to the UPF0178 family.

The sequence is that of UPF0178 protein Plav_1521 from Parvibaculum lavamentivorans (strain DS-1 / DSM 13023 / NCIMB 13966).